Consider the following 165-residue polypeptide: Small ribosomal subunit protein uS5 (165 aa).

Positions 10-73 (LKEKVVHINR…EDAKKNIVEV (64 aa)) constitute an S5 DRBM domain.

It belongs to the universal ribosomal protein uS5 family. In terms of assembly, part of the 30S ribosomal subunit. Contacts proteins S4 and S8.

With S4 and S12 plays an important role in translational accuracy. In terms of biological role, located at the back of the 30S subunit body where it stabilizes the conformation of the head with respect to the body. The protein is Small ribosomal subunit protein uS5 of Clostridium botulinum (strain ATCC 19397 / Type A).